Here is a 508-residue protein sequence, read N- to C-terminus: Probable ligand-gated ion channel 46 (508 aa).

A signal peptide spans 1 to 18 (MQYLQFLSLVVLLLMCHA). Topologically, residues 19–274 (RKSVYRRNSP…FEFKRRAGWY (256 aa)) are extracellular. Asn65, Asn134, Asn175, and Asn201 each carry an N-linked (GlcNAc...) asparagine glycan. A disulfide bridge links Cys190 with Cys204. A helical membrane pass occupies residues 275-295 (ILQAYLPTYLTICISWISFAL). Topologically, residues 296–301 (GSKAIP) are cytoplasmic. A helical membrane pass occupies residues 302–321 (ARTMLGVNSLLAMTFQFGNI). Residues 322-335 (IRNLPRVSYVKAID) lie on the Extracellular side of the membrane. Residues 336-356 (VWMLSCMTFVFCSLLELAWVG) form a helical membrane-spanning segment. At 357 to 480 (YLSREEEPTS…KQRREILAHK (124 aa)) the chain is on the cytoplasmic side. Residues 374-407 (AQVAPKPCHPPPVQQNANNSSVHRRQKQPKNEEE) are disordered. A helical transmembrane segment spans residues 481 to 501 (IDSVSVFMFPFLFVLFNIAYW). Over 502 to 508 (QHYLRGY) the chain is Extracellular.

This sequence belongs to the ligand-gated ion channel (TC 1.A.9) family. As to expression, expressed in the nervous system, with high expression in cholinergic motor neurons and weak expression in GABAergic motor neurons.

It is found in the presynaptic cell membrane. Its subcellular location is the cell projection. It localises to the axon. The protein resides in the cytoplasmic vesicle. The protein localises to the secretory vesicle. It is found in the synaptic vesicle. Functionally, probable component of a ligand-gated anion channel. Negatively regulates synaptic transmission and synaptic vesicle release in response to acetylcholine in cholinergic motor neurons. Role in synaptic vesicle release kinetics may be in association with the ligand-gated ion channel protein acc-4. The chain is Probable ligand-gated ion channel 46 from Caenorhabditis elegans.